The sequence spans 55 residues: Conotoxin vc5b (55 aa).

Residues 1 to 15 form the signal peptide; sequence VILLLLIASAPSVDA. The propeptide occupies 16 to 41; it reads QPKTKDDVPLAPLHDNAKSALQHLNQ. Residue glutamine 53 is modified to Glutamine amide.

Contains 2 disulfide bonds that can be either 'C1-C3, C2-C4' or 'C1-C4, C2-C3', since these disulfide connectivities have been observed for conotoxins with cysteine framework V (for examples, see AC P0DQQ7 and AC P81755). As to expression, expressed by the venom duct.

The protein resides in the secreted. This Conus victoriae (Queen Victoria cone) protein is Conotoxin vc5b.